The chain runs to 305 residues: Ornithine carbamoyltransferase (305 aa).

Residues 54–57 (STRT), Gln81, Arg105, and 132–135 (HPCQ) each bind carbamoyl phosphate. L-ornithine contacts are provided by residues Asn163, Asp223, and 227 to 228 (SM). Carbamoyl phosphate-binding positions include 262–263 (CL) and Arg290.

It belongs to the aspartate/ornithine carbamoyltransferase superfamily. OTCase family.

It localises to the cytoplasm. It carries out the reaction carbamoyl phosphate + L-ornithine = L-citrulline + phosphate + H(+). It participates in amino-acid biosynthesis; L-arginine biosynthesis; L-arginine from L-ornithine and carbamoyl phosphate: step 1/3. Its function is as follows. Reversibly catalyzes the transfer of the carbamoyl group from carbamoyl phosphate (CP) to the N(epsilon) atom of ornithine (ORN) to produce L-citrulline. In Agrobacterium fabrum (strain C58 / ATCC 33970) (Agrobacterium tumefaciens (strain C58)), this protein is Ornithine carbamoyltransferase.